We begin with the raw amino-acid sequence, 214 residues long: STS14 protein (214 aa).

The N-terminal stretch at 1-19 (MFVLSTAMACLVYIYIYIY) is a signal peptide. 3 repeat units span residues 13–14 (YI), 15–16 (YI), and 17–18 (YI). The segment at 13–18 (YIYIYI) is 3 X 2 AA tandem repeats of Y-I. Positions 80-200 (LDAHNKARSE…YEGPATLTVC (121 aa)) constitute an SCP domain.

It belongs to the CRISP family. Highly expressed in the stigma and stylar cortex throughout pistil development. Not expressed in other organs.

In terms of biological role, may protect the outer tissues of the pistil from pathogen attack. The chain is STS14 protein (STS14) from Solanum tuberosum (Potato).